Here is a 1135-residue protein sequence, read N- to C-terminus: Retinoblastoma-like protein 2 (1135 aa).

The interval 1–43 is disordered; the sequence is MASGGNQSPPPPPAAAASSEEEEEDGDAADRAQPAGSPSHQIQ. A Phosphoserine modification is found at Ser-410. Residue Thr-414 is modified to Phosphothreonine. Positions 414–613 are domain A; the sequence is TPVSTAAHSL…DRIRDNENRV (200 aa). Residues 414–1021 are pocket; binds E1A; sequence TPVSTAAHSL…QAFAMKYSQA (608 aa). O-linked (GlcNAc) serine glycosylation occurs at Ser-417. Residues 614–824 form a spacer region; that stretch reads PTCEEVMPPQ…PGQPLTSSSI (211 aa). At Ser-636 the chain carries Phosphoserine. Phosphothreonine is present on Thr-639. Phosphoserine is present on residues Ser-659, Ser-669, Ser-684, Ser-942, Ser-946, Ser-960, Ser-965, and Ser-967. Polar residues-rich tracts occupy residues 661–674, 683–692, 935–950, and 958–969; these read TTLYDRYSSPTVST, DSPSEGSTSG, SGSSESRSHQNSPTEL, and DSSPVMRSNSTL. 2 disordered regions span residues 661-698 and 930-994; these read TTLYDRYSSPTVSTTRRRLFENDSPSEGSTSGRIPPQP and GKRR…VEEE. Residues 825–1021 are domain B; that stretch reads RPRKTSSLAL…QAFAMKYSQA (197 aa). Thr-968 carries the phosphothreonine modification. A compositionally biased stretch (pro residues) spans 971–981; it reads VPQPSSAPPTP. A phosphoserine mark is found at Ser-975 and Ser-976. Residue Thr-980 is modified to Phosphothreonine. Phosphoserine is present on residues Ser-1031, Ser-1064, Ser-1076, and Ser-1108.

Belongs to the retinoblastoma protein (RB) family. As to quaternary structure, interacts with AATF and RINT1. Component of the DREAM complex (also named LINC complex) at least composed of E2F4, E2F5, LIN9, LIN37, LIN52, LIN54, MYBL1, MYBL2, RBL1, RBL2, RBBP4, TFDP1 and TFDP2. The complex exists in quiescent cells where it represses cell cycle-dependent genes. It dissociates in S phase when LIN9, LIN37, LIN52 and LIN54 form a subcomplex that binds to MYBL2. Interacts with USP4. Interacts with KMT5B, KMT5C and USP4. Interacts with PML. Interacts with RBBP9. Interacts with CD53. During G0 and early G1 phase of the cell cycle, phosphorylated on Ser-636 and on 5 sites within the domain B. Phosphorylation on Ser-669 in G1 leads to its ubiquitin-dependent proteolysis.

The protein localises to the nucleus. Key regulator of entry into cell division. Directly involved in heterochromatin formation by maintaining overall chromatin structure and, in particular, that of constitutive heterochromatin by stabilizing histone methylation. Recruits and targets histone methyltransferases KMT5B and KMT5C, leading to epigenetic transcriptional repression. Controls histone H4 'Lys-20' trimethylation. Probably acts as a transcription repressor by recruiting chromatin-modifying enzymes to promoters. Potent inhibitor of E2F-mediated trans-activation, associates preferentially with E2F5. Binds to cyclins A and E. Binds to and may be involved in the transforming capacity of the adenovirus E1A protein. May act as a tumor suppressor. This Mus musculus (Mouse) protein is Retinoblastoma-like protein 2 (Rbl2).